Here is a 359-residue protein sequence, read N- to C-terminus: Probable dual-specificity RNA methyltransferase RlmN (359 aa).

Residue Glu91 is the Proton acceptor of the active site. Residues 97-329 (QHYGHSVCVT…KKNGVNCVVR (233 aa)) enclose the Radical SAM core domain. Cys104 and Cys340 form a disulfide bridge. Cys111, Cys115, and Cys118 together coordinate [4Fe-4S] cluster. S-adenosyl-L-methionine contacts are provided by residues 163 to 164 (GE), Ser195, 218 to 220 (SLH), and Asn296. The active-site S-methylcysteine intermediate is Cys340.

Belongs to the radical SAM superfamily. RlmN family. The cofactor is [4Fe-4S] cluster.

It localises to the cytoplasm. It carries out the reaction adenosine(2503) in 23S rRNA + 2 reduced [2Fe-2S]-[ferredoxin] + 2 S-adenosyl-L-methionine = 2-methyladenosine(2503) in 23S rRNA + 5'-deoxyadenosine + L-methionine + 2 oxidized [2Fe-2S]-[ferredoxin] + S-adenosyl-L-homocysteine. The catalysed reaction is adenosine(37) in tRNA + 2 reduced [2Fe-2S]-[ferredoxin] + 2 S-adenosyl-L-methionine = 2-methyladenosine(37) in tRNA + 5'-deoxyadenosine + L-methionine + 2 oxidized [2Fe-2S]-[ferredoxin] + S-adenosyl-L-homocysteine. Specifically methylates position 2 of adenine 2503 in 23S rRNA and position 2 of adenine 37 in tRNAs. This chain is Probable dual-specificity RNA methyltransferase RlmN, found in Streptococcus pyogenes serotype M2 (strain MGAS10270).